Consider the following 775-residue polypeptide: Transposon TX1 uncharacterized 82 kDa protein (775 aa).

A compositionally biased stretch (basic and acidic residues) spans 1 to 10 (MGGNKKESYK). Disordered stretches follow at residues 1–46 (MGGN…ASTS), 256–277 (PKGQ…KTSY), and 535–565 (PIQD…TSTV). Polar residues predominate over residues 35 to 46 (EPMSKSPIASTS). The span at 539-549 (PADKTAGKDGE) shows a compositional bias: basic and acidic residues.

In Xenopus laevis (African clawed frog), this protein is Transposon TX1 uncharacterized 82 kDa protein.